The sequence spans 283 residues: Foldase protein PrsA 3 (283 aa).

Positions 1-21 are cleaved as a signal peptide; sequence MKKKKIFIGTIISCVMLALSA. A lipid anchor (N-palmitoyl cysteine) is attached at Cys22. Residue Cys22 is the site of S-diacylglycerol cysteine attachment. The PpiC domain occupies 132-222; the sequence is KPEMKVSHIL…YGYHIIKVTD (91 aa).

The protein belongs to the PrsA family.

The protein resides in the cell membrane. The enzyme catalyses [protein]-peptidylproline (omega=180) = [protein]-peptidylproline (omega=0). Its function is as follows. Plays a major role in protein secretion by helping the post-translocational extracellular folding of several secreted proteins. This is Foldase protein PrsA 3 (prsA3) from Bacillus cereus (strain ATCC 14579 / DSM 31 / CCUG 7414 / JCM 2152 / NBRC 15305 / NCIMB 9373 / NCTC 2599 / NRRL B-3711).